A 337-amino-acid chain; its full sequence is Putative 4-hydroxythreonine-4-phosphate dehydrogenase 2 (337 aa).

Positions 173, 217, and 274 each coordinate a divalent metal cation.

The protein belongs to the PdxA family. Homodimer. Zn(2+) is required as a cofactor. The cofactor is Mg(2+). It depends on Co(2+) as a cofactor.

It is found in the cytoplasm. It carries out the reaction 4-(phosphooxy)-L-threonine + NAD(+) = 3-amino-2-oxopropyl phosphate + CO2 + NADH. The protein operates within cofactor biosynthesis; pyridoxine 5'-phosphate biosynthesis; pyridoxine 5'-phosphate from D-erythrose 4-phosphate: step 4/5. Functionally, catalyzes the NAD(P)-dependent oxidation of 4-(phosphooxy)-L-threonine (HTP) into 2-amino-3-oxo-4-(phosphooxy)butyric acid which spontaneously decarboxylates to form 3-amino-2-oxopropyl phosphate (AHAP). This Pseudomonas aeruginosa (strain ATCC 15692 / DSM 22644 / CIP 104116 / JCM 14847 / LMG 12228 / 1C / PRS 101 / PAO1) protein is Putative 4-hydroxythreonine-4-phosphate dehydrogenase 2.